A 303-amino-acid polypeptide reads, in one-letter code: N-acetyl-D-glucosamine kinase (303 aa).

ATP contacts are provided by residues 4–11 (GFDIGGTK) and 133–140 (GVGGGLIF). Residues histidine 157, cysteine 177, cysteine 179, and cysteine 184 each contribute to the Zn(2+) site.

It belongs to the ROK (NagC/XylR) family. NagK subfamily.

It carries out the reaction N-acetyl-D-glucosamine + ATP = N-acetyl-D-glucosamine 6-phosphate + ADP + H(+). It functions in the pathway cell wall biogenesis; peptidoglycan recycling. Catalyzes the phosphorylation of N-acetyl-D-glucosamine (GlcNAc) derived from cell-wall degradation, yielding GlcNAc-6-P. This is N-acetyl-D-glucosamine kinase from Escherichia coli O9:H4 (strain HS).